The sequence spans 339 residues: Glyceraldehyde-3-phosphate dehydrogenase (339 aa).

NAD(+)-binding positions include 12 to 13 (RI), Asp35, and Lys84. D-glyceraldehyde 3-phosphate-binding positions include 155–157 (SCT), Thr186, 215–216 (TG), and Arg238. Cys156 functions as the Nucleophile in the catalytic mechanism. Asn320 is a binding site for NAD(+).

The protein belongs to the glyceraldehyde-3-phosphate dehydrogenase family. As to quaternary structure, homotetramer.

The protein localises to the cytoplasm. It carries out the reaction D-glyceraldehyde 3-phosphate + phosphate + NAD(+) = (2R)-3-phospho-glyceroyl phosphate + NADH + H(+). It functions in the pathway carbohydrate degradation; glycolysis; pyruvate from D-glyceraldehyde 3-phosphate: step 1/5. In Mastigamoeba balamuthi (Phreatamoeba balamuthi), this protein is Glyceraldehyde-3-phosphate dehydrogenase (GAPD).